A 285-amino-acid chain; its full sequence is RNA polymerase sigma factor RpoH (285 aa).

Residues 53–122 are sigma-70 factor domain-2; it reads LILSHLRFVI…IHEYVLRNWR (70 aa). An Interaction with polymerase core subunit RpoC motif is present at residues 77 to 80; it reads DLIQ. The interval 229-281 is sigma-70 factor domain-4; that stretch reads ALLRLDERSRNIIRARWLDKKEKNTLQKIANNYGISAERVRQLEKNAMKKLKI. Positions 254 to 273 form a DNA-binding region, H-T-H motif; the sequence is LQKIANNYGISAERVRQLEK.

Belongs to the sigma-70 factor family. RpoH subfamily. Interacts with the RNA polymerase core enzyme.

It localises to the cytoplasm. In terms of biological role, sigma factors are initiation factors that promote the attachment of RNA polymerase to specific initiation sites and are then released. This sigma factor is involved in regulation of expression of heat shock genes. The sequence is that of RNA polymerase sigma factor RpoH from Buchnera aphidicola subsp. Schizaphis graminum (strain Sg).